Here is a 274-residue protein sequence, read N- to C-terminus: Pantothenate synthetase (274 aa).

Position 27–34 (27–34 (MGALHQGH)) interacts with ATP. Catalysis depends on histidine 34, which acts as the Proton donor. Glutamine 58 provides a ligand contact to (R)-pantoate. Glutamine 58 lines the beta-alanine pocket. 144–147 (GKKD) is an ATP binding site. Glutamine 150 contacts (R)-pantoate. ATP is bound by residues isoleucine 173 and 181-184 (LSSR).

Belongs to the pantothenate synthetase family. Homodimer.

It localises to the cytoplasm. It catalyses the reaction (R)-pantoate + beta-alanine + ATP = (R)-pantothenate + AMP + diphosphate + H(+). It functions in the pathway cofactor biosynthesis; (R)-pantothenate biosynthesis; (R)-pantothenate from (R)-pantoate and beta-alanine: step 1/1. In terms of biological role, catalyzes the condensation of pantoate with beta-alanine in an ATP-dependent reaction via a pantoyl-adenylate intermediate. This Sulfurovum sp. (strain NBC37-1) protein is Pantothenate synthetase.